The following is an 819-amino-acid chain: NEDD4-binding protein 1 (819 aa).

The segment covering 1-13 (MASGSVQSSSGNG) has biased composition (polar residues). Residues 1 to 20 (MASGSVQSSSGNGRRQAAVV) form a disordered region. The KH-like domain maps to 80-164 (KQAVRRAKEY…VQQFIALFKD (85 aa)). Basic and acidic residues predominate over residues 226–241 (DDKAECKVNQKDEVSR). Disordered regions lie at residues 226-247 (DDKA…AGTP) and 666-736 (KLDD…MAPR). One can recognise an RNase NYN domain in the interval 517 to 669 (LKHIIIDGSN…LGRYGPKLDD (153 aa)). Polar residues predominate over residues 673–689 (KQPNNRTVHSSFPSSNE). The coCUN stretch occupies residues 772–819 (RSPSETMQLKEALLKIFPEADQRHKINEILTAHPFMRDLNALSAMVLD).

This sequence belongs to the N4BP1 family.

Its subcellular location is the cytoplasm. It localises to the cytosol. The protein localises to the nucleus. The protein resides in the nucleolus. It is found in the PML body. Its function is as follows. Potent suppressor of cytokine production that acts as a regulator of innate immune signaling and inflammation. Acts as a key negative regulator of select cytokine and chemokine responses elicited by TRIF-independent Toll-like receptors (TLRs), thereby limiting inflammatory cytokine responses to minor insults. Has ribonuclease activity. In Xenopus tropicalis (Western clawed frog), this protein is NEDD4-binding protein 1.